A 280-amino-acid polypeptide reads, in one-letter code: Large ribosomal subunit protein uL2 (280 aa).

Disordered regions lie at residues 29–58 and 225–280; these read PEKS…GGGH and VMNP…NKKR. The span at 45 to 58 shows a compositional bias: basic residues; the sequence is SHGHITTRHRGGGH. Positions 253–269 are enriched in basic and acidic residues; the sequence is KEGRTRKPKRYSDDMIV. Positions 270–280 are enriched in basic residues; the sequence is RRRRANKNKKR.

The protein belongs to the universal ribosomal protein uL2 family. In terms of assembly, part of the 50S ribosomal subunit. Forms a bridge to the 30S subunit in the 70S ribosome.

In terms of biological role, one of the primary rRNA binding proteins. Required for association of the 30S and 50S subunits to form the 70S ribosome, for tRNA binding and peptide bond formation. It has been suggested to have peptidyltransferase activity; this is somewhat controversial. Makes several contacts with the 16S rRNA in the 70S ribosome. The sequence is that of Large ribosomal subunit protein uL2 from Corynebacterium glutamicum (strain R).